Reading from the N-terminus, the 227-residue chain is tRNA (guanine-N(1)-)-methyltransferase (227 aa).

S-adenosyl-L-methionine contacts are provided by residues G110 and 129 to 134; that span reads IGDYVL.

This sequence belongs to the RNA methyltransferase TrmD family. Homodimer.

The protein resides in the cytoplasm. The enzyme catalyses guanosine(37) in tRNA + S-adenosyl-L-methionine = N(1)-methylguanosine(37) in tRNA + S-adenosyl-L-homocysteine + H(+). Its function is as follows. Specifically methylates guanosine-37 in various tRNAs. This is tRNA (guanine-N(1)-)-methyltransferase from Mycoplasmopsis agalactiae (strain NCTC 10123 / CIP 59.7 / PG2) (Mycoplasma agalactiae).